Consider the following 291-residue polypeptide: MTTLAIDIGGTKLAAALIGADGQIRDRRELPTPASQTPQALRDALAALVAPLQAHAQQVAIASTGIIRDGSLLALNPHNLGGLLHFPLVKTLEQLSNLPTIAINDAQAAAWAEYQALEGDITDMVFITVSTGVGGGVVSGGKLLTGPSGLAGHIGHTLADPHGPVCGCGRTGCVEAIASGRGIAAAAQGELMGADARTIFTRAGQGDEQAQQLIHRSAHVLARLIADIKATTDCQCVVVGGSVGLAEGYLALVKTYLAQEPAAFHVDLLAAHYRHDAGLLGAALLAQGEKL.

Residues 5–12 (AIDIGGTK) and 132–139 (GVGGGVVS) each bind ATP. 4 residues coordinate Zn(2+): His156, Cys166, Cys168, and Cys173.

It belongs to the ROK (NagC/XylR) family. NanK subfamily. Homodimer.

It carries out the reaction an N-acyl-D-mannosamine + ATP = an N-acyl-D-mannosamine 6-phosphate + ADP + H(+). Its pathway is amino-sugar metabolism; N-acetylneuraminate degradation; D-fructose 6-phosphate from N-acetylneuraminate: step 2/5. Its function is as follows. Catalyzes the phosphorylation of N-acetylmannosamine (ManNAc) to ManNAc-6-P. This is N-acetylmannosamine kinase from Shigella boydii serotype 18 (strain CDC 3083-94 / BS512).